The primary structure comprises 64 residues: Prokaryotic ubiquitin-like protein Pup (64 aa).

The span at 1 to 11 shows a compositional bias: basic and acidic residues; sequence MAQEQTKRTGG. Positions 1–38 are disordered; it reads MAQEQTKRTGGGDEDDTPGGDGAAGQERREKLAEDTDD. The segment at 21 to 58 is ARC ATPase binding; sequence DGAAGQERREKLAEDTDDLLDEIDDVLEENAEDFVRAY. The stretch at 24 to 52 forms a coiled coil; sequence AGQERREKLAEDTDDLLDEIDDVLEENAE. Glutamine 64 carries the post-translational modification Deamidated glutamine. Residue glutamine 64 forms an Isoglutamyl lysine isopeptide (Gln-Lys) (interchain with K-? in acceptor proteins) linkage.

The protein belongs to the prokaryotic ubiquitin-like protein family. Strongly interacts with the proteasome-associated ATPase ARC through a hydrophobic interface; the interacting region of Pup lies in its C-terminal half. There is one Pup binding site per ARC hexamer ring. Is modified by deamidation of its C-terminal glutamine to glutamate by the deamidase Dop, a prerequisite to the subsequent pupylation process.

The protein operates within protein degradation; proteasomal Pup-dependent pathway. Its function is as follows. Protein modifier that is covalently attached to lysine residues of substrate proteins, thereby targeting them for proteasomal degradation. The tagging system is termed pupylation. This is Prokaryotic ubiquitin-like protein Pup from Rhodococcus opacus (strain B4).